The following is a 739-amino-acid chain: Disintegrin and metalloproteinase domain-containing protein 18 (739 aa).

An N-terminal signal peptide occupies residues 1–16 (MFLLLALLTELGRLQA). Residues 17-184 (HEGSEGIFLH…IKNLSKLLPQ (168 aa)) constitute a propeptide that is removed on maturation. Residues Asn-36, Asn-76, Asn-122, Asn-149, Asn-156, Asn-177, and Asn-294 are each glycosylated (N-linked (GlcNAc...) asparagine). Residues 177 to 687 (NLSKLLPQYL…EKGYNTHWNN (511 aa)) lie on the Extracellular side of the membrane. One can recognise a Peptidase M12B domain in the interval 184 to 381 (QYLEIYIIVE…FETKCLQKLS (198 aa)). Disulfide bonds link Cys-293–Cys-376, Cys-335–Cys-360, Cys-337–Cys-342, and Cys-450–Cys-471. 5 N-linked (GlcNAc...) asparagine glycosylation sites follow: Asn-359, Asn-465, Asn-561, Asn-611, and Asn-625. Residues 390-479 (QPVCGNGILE…NCVPDTYALN (90 aa)) form the Disintegrin domain. The region spanning 620 to 654 (MGYNCNATTKCKGKGICNNFGNCQCFPGHRPPDCK) is the EGF-like domain. 3 disulfide bridges follow: Cys-624–Cys-636, Cys-630–Cys-642, and Cys-644–Cys-653. Residues 688-708 (WFILSFCIFLPFFIVFTTVIF) form a helical membrane-spanning segment. Residues 709–739 (KRNEISKSCNRENAEYNRNSSVVSESDDVGH) are Cytoplasmic-facing.

In terms of processing, the prodomain and the metalloprotease-like domain are cleaved during the epididymal maturation of the spermatozoa. As to expression, expressed specifically in testis.

The protein resides in the membrane. Sperm surface membrane protein that may be involved in spermatogenesis and fertilization. This is a non catalytic metalloprotease-like protein. The polypeptide is Disintegrin and metalloproteinase domain-containing protein 18 (ADAM18) (Homo sapiens (Human)).